A 236-amino-acid polypeptide reads, in one-letter code: Small ribosomal subunit protein uS2c (236 aa).

This sequence belongs to the universal ribosomal protein uS2 family.

Its subcellular location is the plastid. The protein localises to the chloroplast. This chain is Small ribosomal subunit protein uS2c (rps2), found in Citrus sinensis (Sweet orange).